Reading from the N-terminus, the 416-residue chain is Homogentisate 1,2-dioxygenase (416 aa).

Catalysis depends on His275, which acts as the Proton acceptor. The Fe cation site is built by His318 and Glu324. Homogentisate contacts are provided by Tyr333 and His354. His354 lines the Fe cation pocket.

This sequence belongs to the homogentisate dioxygenase family. Hexamer; dimer of trimers. It depends on Fe cation as a cofactor.

It carries out the reaction homogentisate + O2 = 4-maleylacetoacetate + H(+). It participates in amino-acid degradation; L-phenylalanine degradation; acetoacetate and fumarate from L-phenylalanine: step 4/6. Functionally, involved in the catabolism of homogentisate (2,5-dihydroxyphenylacetate or 2,5-OH-PhAc), a central intermediate in the degradation of phenylalanine and tyrosine. Catalyzes the oxidative ring cleavage of the aromatic ring of homogentisate to yield maleylacetoacetate. The chain is Homogentisate 1,2-dioxygenase from Legionella pneumophila (strain Corby).